A 380-amino-acid polypeptide reads, in one-letter code: Cytochrome b (380 aa).

Transmembrane regions (helical) follow at residues 34–54 (FGSLLGICLMTQILTGLLLAM), 78–99 (WLIRNLHANGASFFFICIYLHI), 114–134 (WNTGIILLLTLMATAFVGYVL), and 179–199 (FFALHFLLPFAIAGLTLIHLT). 2 residues coordinate heme b: histidine 84 and histidine 98. Histidine 183 and histidine 197 together coordinate heme b. Histidine 202 lines the a ubiquinone pocket. The next 4 helical transmembrane spans lie at 227-247 (LKDILGFALMVLPLTSLALFS), 289-309 (LGGVLALAASVLVLFLSPFLH), 321-341 (LSQLLFWILVTNLFILTWVGS), and 348-368 (FIIIGQLASITYFTILLILFP).

The protein belongs to the cytochrome b family. In terms of assembly, the cytochrome bc1 complex contains 11 subunits: 3 respiratory subunits (MT-CYB, CYC1 and UQCRFS1), 2 core proteins (UQCRC1 and UQCRC2) and 6 low-molecular weight proteins (UQCRH/QCR6, UQCRB/QCR7, UQCRQ/QCR8, UQCR10/QCR9, UQCR11/QCR10 and a cleavage product of UQCRFS1). This cytochrome bc1 complex then forms a dimer. Heme b is required as a cofactor.

It is found in the mitochondrion inner membrane. Functionally, component of the ubiquinol-cytochrome c reductase complex (complex III or cytochrome b-c1 complex) that is part of the mitochondrial respiratory chain. The b-c1 complex mediates electron transfer from ubiquinol to cytochrome c. Contributes to the generation of a proton gradient across the mitochondrial membrane that is then used for ATP synthesis. The sequence is that of Cytochrome b (MT-CYB) from Macronectes giganteus (Southern giant petrel).